A 188-amino-acid polypeptide reads, in one-letter code: C-type lectin domain family 5 member A (188 aa).

The Cytoplasmic segment spans residues 1-4 (MNWH). The chain crosses the membrane as a helical; Signal-anchor for type II membrane protein span at residues 5–27 (MIISGLIVVVLKVVGMTLFLLYF). At 28 to 188 (PQIFNKSNDG…YRRICEKNAK (161 aa)) the chain is on the extracellular side. Asn-32 is a glycosylation site (N-linked (GlcNAc...) asparagine). A disulfide bond links Cys-71 and Cys-82. The C-type lectin domain occupies 78-184 (YQARCFFLST…CDISYRRICE (107 aa)). Asn-93, Asn-144, and Asn-151 each carry an N-linked (GlcNAc...) asparagine glycan. 2 disulfides stabilise this stretch: Cys-99–Cys-183 and Cys-161–Cys-175.

As to quaternary structure, monomer. Homodimer. The majority of CLEC5A is expressed as a monomeric form on macrophages. Interacts with TYROBP/DAP12. The interaction with TYROBP is required for CLEC5A cell surface expression. Interacts with HCST/DAP10. Forms a CLEC5A/TYROBP/HCST trimolecular complex depending almost solely on TYROBP. In terms of assembly, (Microbial infection) Interacts with dengue virus envelope protein E. Post-translationally, N-glycosylated. Contains sialic acid residues. As to expression, highly expressed in bone marrow with lower levels in synovium, lung and bronchus. Expressed in peripheral blood monocytes and in the monocyte/macrophage cell lines U-937 and Mono-Mac-6, but not in cell lines of other origins. Expression is down-regulated when monocytes differentiate into dendritic cells.

Its subcellular location is the cell membrane. In terms of biological role, functions as a positive regulator of osteoclastogenesis. Cell surface receptor that signals via TYROBP. Regulates inflammatory responses. Functionally, (Microbial infection) Critical macrophage receptor for dengue virus serotypes 1-4. The binding of dengue virus to CLEC5A triggers signaling through the phosphorylation of TYROBP. This interaction does not result in viral entry, but stimulates pro-inflammatory cytokine release. The polypeptide is C-type lectin domain family 5 member A (CLEC5A) (Homo sapiens (Human)).